Here is a 141-residue protein sequence, read N- to C-terminus: uncharacterized protein (141 aa).

The region spanning valine 13–lysine 141 is the Ferritin-like diiron domain. Fe cation contacts are provided by glutamate 63, histidine 66, glutamate 125, and histidine 128.

This is an uncharacterized protein from Methanocaldococcus jannaschii (strain ATCC 43067 / DSM 2661 / JAL-1 / JCM 10045 / NBRC 100440) (Methanococcus jannaschii).